The chain runs to 88 residues: Large ribosomal subunit protein bL27 (88 aa).

The protein belongs to the bacterial ribosomal protein bL27 family.

This is Large ribosomal subunit protein bL27 from Acidobacterium capsulatum (strain ATCC 51196 / DSM 11244 / BCRC 80197 / JCM 7670 / NBRC 15755 / NCIMB 13165 / 161).